We begin with the raw amino-acid sequence, 302 residues long: Pyridoxal 5'-phosphate synthase subunit PdxS (302 aa).

Position 32 (Asp32) interacts with D-ribose 5-phosphate. The Schiff-base intermediate with D-ribose 5-phosphate role is filled by Lys89. Residue Gly161 participates in D-ribose 5-phosphate binding. A D-glyceraldehyde 3-phosphate-binding site is contributed by Arg173. D-ribose 5-phosphate contacts are provided by residues Gly222 and 243–244 (GS). Positions 278-302 (GIGKGMKGQSNEDLPDEEKLQGRGV) are disordered.

This sequence belongs to the PdxS/SNZ family. In the presence of PdxT, forms a dodecamer of heterodimers.

It catalyses the reaction aldehydo-D-ribose 5-phosphate + D-glyceraldehyde 3-phosphate + L-glutamine = pyridoxal 5'-phosphate + L-glutamate + phosphate + 3 H2O + H(+). It functions in the pathway cofactor biosynthesis; pyridoxal 5'-phosphate biosynthesis. Its function is as follows. Catalyzes the formation of pyridoxal 5'-phosphate from ribose 5-phosphate (RBP), glyceraldehyde 3-phosphate (G3P) and ammonia. The ammonia is provided by the PdxT subunit. Can also use ribulose 5-phosphate and dihydroxyacetone phosphate as substrates, resulting from enzyme-catalyzed isomerization of RBP and G3P, respectively. The polypeptide is Pyridoxal 5'-phosphate synthase subunit PdxS (Halorubrum lacusprofundi (strain ATCC 49239 / DSM 5036 / JCM 8891 / ACAM 34)).